The primary structure comprises 327 residues: GMP reductase (327 aa).

Residue Cys-176 is the Thioimidate intermediate of the active site. 205 to 228 (IIADGGIRTHGDIAKSIRFGASMV) provides a ligand contact to NADP(+).

Belongs to the IMPDH/GMPR family. GuaC type 2 subfamily.

The enzyme catalyses IMP + NH4(+) + NADP(+) = GMP + NADPH + 2 H(+). Its function is as follows. Catalyzes the irreversible NADPH-dependent deamination of GMP to IMP. It functions in the conversion of nucleobase, nucleoside and nucleotide derivatives of G to A nucleotides, and in maintaining the intracellular balance of A and G nucleotides. This chain is GMP reductase, found in Streptococcus pyogenes serotype M3 (strain ATCC BAA-595 / MGAS315).